The sequence spans 420 residues: tRNA(Ile)-lysidine synthase, chloroplastic (420 aa).

Residue 63 to 68 (SGGQDS) coordinates ATP.

The protein belongs to the tRNA(Ile)-lysidine synthase family.

It is found in the plastid. It localises to the chloroplast. The enzyme catalyses cytidine(34) in tRNA(Ile2) + L-lysine + ATP = lysidine(34) in tRNA(Ile2) + AMP + diphosphate + H(+). Functionally, ligates lysine onto the cytidine present at position 34 of the AUA codon-specific tRNA(Ile) that contains the anticodon CAU, in an ATP-dependent manner. Cytidine is converted to lysidine, thus changing the amino acid specificity of the tRNA from methionine to isoleucine. This is tRNA(Ile)-lysidine synthase, chloroplastic from Zygnema circumcarinatum (Green alga).